The sequence spans 158 residues: Large ribosomal subunit protein uL15 (158 aa).

Residues 1–13 (MKLNEIKDNEGST) show a composition bias toward basic and acidic residues. The interval 1–44 (MKLNEIKDNEGSTHSRKRLGRGIGSGSGKTAGRGVKGQKSRSGV) is disordered. The segment covering 21–35 (RGIGSGSGKTAGRGV) has biased composition (gly residues).

The protein belongs to the universal ribosomal protein uL15 family. In terms of assembly, part of the 50S ribosomal subunit.

Functionally, binds to the 23S rRNA. This Rhizobium etli (strain ATCC 51251 / DSM 11541 / JCM 21823 / NBRC 15573 / CFN 42) protein is Large ribosomal subunit protein uL15.